We begin with the raw amino-acid sequence, 573 residues long: Acyl-coenzyme A synthetase ACSM1, mitochondrial (573 aa).

Residues 1–35 (MQWLKSFQICKVLQGFSLSPTQLHRRLFSRVGAPR) constitute a mitochondrion transit peptide. The residue at position 81 (lysine 81) is an N6-succinyllysine. N6-acetyllysine; alternate is present on lysine 142. Position 142 is an N6-succinyllysine; alternate (lysine 142). Lysine 179 carries the N6-succinyllysine modification. Residue lysine 200 is modified to N6-acetyllysine; alternate. An N6-succinyllysine; alternate modification is found at lysine 200. N6-acetyllysine is present on lysine 210. Residue 222-230 (TSGTTGYPK) participates in ATP binding. N6-succinyllysine occurs at positions 233 and 324. N6-acetyllysine; alternate occurs at positions 352 and 387. 2 positions are modified to N6-succinyllysine; alternate: lysine 352 and lysine 387. ATP contacts are provided by aspartate 448 and arginine 463. Position 501 is an N6-succinyllysine (lysine 501). Lysine 527 is subject to N6-acetyllysine. At lysine 534 the chain carries N6-acetyllysine; alternate. Lysine 534 carries the post-translational modification N6-succinyllysine; alternate. Position 545 is an N6-acetyllysine (lysine 545). Residue lysine 559 coordinates ATP.

This sequence belongs to the ATP-dependent AMP-binding enzyme family. Monomer. Requires Mg(2+) as cofactor. The cofactor is Mn(2+). As to expression, highly expressed in liver and kidney.

It localises to the mitochondrion matrix. The protein resides in the mitochondrion. It carries out the reaction a medium-chain fatty acid + ATP + CoA = a medium-chain fatty acyl-CoA + AMP + diphosphate. The catalysed reaction is benzoate + ATP + CoA = benzoyl-CoA + AMP + diphosphate. The enzyme catalyses (R)-lipoate + GTP + H(+) = (R)-lipoyl-GMP + diphosphate. It catalyses the reaction octanoate + ATP + CoA = octanoyl-CoA + AMP + diphosphate. It carries out the reaction decanoate + ATP + CoA = decanoyl-CoA + AMP + diphosphate. The catalysed reaction is dodecanoate + ATP + CoA = dodecanoyl-CoA + AMP + diphosphate. The enzyme catalyses tetradecanoate + ATP + CoA = tetradecanoyl-CoA + AMP + diphosphate. It catalyses the reaction hexanoate + ATP + CoA = hexanoyl-CoA + AMP + diphosphate. It carries out the reaction butanoate + ATP + CoA = butanoyl-CoA + AMP + diphosphate. The catalysed reaction is hexadecanoate + ATP + CoA = hexadecanoyl-CoA + AMP + diphosphate. Catalyzes the activation of fatty acids by CoA to produce an acyl-CoA, the first step in fatty acid metabolism. Capable of activating medium-chain fatty acids (e.g. butyric (C4) to decanoic (C10) acids), and certain carboxylate-containing xenobiotics, e.g. benzoate. Also catalyzes the activation of lipoate to lipoyl-nucleoside monophosphate. Activates lipoate with GTP at a 1000-fold higher rate than with ATP and activates both (R)- and (S)-lipoate to the respective lipoyl-GMP, with a preference for (R)-lipoate. The chain is Acyl-coenzyme A synthetase ACSM1, mitochondrial (Acsm1) from Mus musculus (Mouse).